Here is a 330-residue protein sequence, read N- to C-terminus: Phosphate acyltransferase (330 aa).

It belongs to the PlsX family. In terms of assembly, homodimer. Probably interacts with PlsY.

It is found in the cytoplasm. The enzyme catalyses a fatty acyl-[ACP] + phosphate = an acyl phosphate + holo-[ACP]. It functions in the pathway lipid metabolism; phospholipid metabolism. Catalyzes the reversible formation of acyl-phosphate (acyl-PO(4)) from acyl-[acyl-carrier-protein] (acyl-ACP). This enzyme utilizes acyl-ACP as fatty acyl donor, but not acyl-CoA. In Streptococcus pneumoniae (strain 70585), this protein is Phosphate acyltransferase.